Reading from the N-terminus, the 311-residue chain is Aspartate carbamoyltransferase catalytic subunit (311 aa).

2 residues coordinate carbamoyl phosphate: Arg-55 and Thr-56. Lys-85 is an L-aspartate binding site. Residues Arg-106, His-135, and Gln-138 each coordinate carbamoyl phosphate. The L-aspartate site is built by Arg-168 and Arg-230. 2 residues coordinate carbamoyl phosphate: Leu-268 and Pro-269.

Belongs to the aspartate/ornithine carbamoyltransferase superfamily. ATCase family. As to quaternary structure, heterododecamer (2C3:3R2) of six catalytic PyrB chains organized as two trimers (C3), and six regulatory PyrI chains organized as three dimers (R2).

It carries out the reaction carbamoyl phosphate + L-aspartate = N-carbamoyl-L-aspartate + phosphate + H(+). It functions in the pathway pyrimidine metabolism; UMP biosynthesis via de novo pathway; (S)-dihydroorotate from bicarbonate: step 2/3. Its function is as follows. Catalyzes the condensation of carbamoyl phosphate and aspartate to form carbamoyl aspartate and inorganic phosphate, the committed step in the de novo pyrimidine nucleotide biosynthesis pathway. The chain is Aspartate carbamoyltransferase catalytic subunit from Baumannia cicadellinicola subsp. Homalodisca coagulata.